The primary structure comprises 920 residues: Dynamin-B (920 aa).

The segment at 65–84 is disordered; it reads NSNNNNNNNNNNKINKNNNN. The Dynamin-type G domain occupies 154 to 448; that stretch reads EITLPQIIVV…LTKHIRDTFP (295 aa). Residues 164–171 are G1 motif; the sequence is GSQSSGKS. Residue 164 to 172 coordinates GTP; sequence GSQSSGKSS. Residues 190–192 are G2 motif; the sequence is VTR. Residues 204-241 are disordered; sequence TTSRNNVNENEDEDEDDNYYDNDNDDNSLEEWGEFGHT. Acidic residues predominate over residues 212–236; the sequence is ENEDEDEDDNYYDNDNDDNSLEEWG. Residues 290–293 form a G3 motif region; the sequence is DLPG. The interval 359 to 362 is G4 motif; that stretch reads TKLD. Residues 359–365 and 390–393 contribute to the GTP site; these read TKLDLMD and NRSQ. The tract at residues 389 to 392 is G5 motif; it reads VNRS. The tract at residues 680–790 is disordered; the sequence is FQSTSSTSSS…EIQIQQQQQQ (111 aa). Low complexity-rich tracts occupy residues 681 to 705 and 724 to 751; these read QSTSSTSSSPTSSSSSLPLPQNSNP and QIKQQQQQQQQQQQQSYQQQQQQQQKQQ. Residues 724–751 are a coiled coil; sequence QIKQQQQQQQQQQQQSYQQQQQQQQKQQ. Pro residues predominate over residues 765–774; sequence PPSPPSPPQP. Positions 775–790 are enriched in low complexity; that stretch reads KQQQSHEIQIQQQQQQ. The 92-residue stretch at 825–916 folds into the GED domain; that stretch reads IYLLRRLLLA…SLSQSENSDL (92 aa).

It belongs to the TRAFAC class dynamin-like GTPase superfamily. Dynamin/Fzo/YdjA family.

The protein resides in the cytoplasm. Its function is as follows. Enzyme hydrolyzing GTP. This chain is Dynamin-B (dymB), found in Dictyostelium discoideum (Social amoeba).